The following is a 131-amino-acid chain: Inactive protein FON2 SPARE1 (131 aa).

The interval 67 to 131 (SPSSLTTTDR…VPTGPNPLHH (65 aa)) is disordered. Positions 76-97 (RHHHHHRHHGHHHHRGHDRWNR) are enriched in basic residues.

Belongs to the CLV3/ESR signal peptide family. Expressed in all aerial apical meristems, including the floral and inflorescence meristems in the reproductive phase and the shoot apical meristem in the vegetative phase. Also detected in the primordia of lateral organs such as the leaf and the floral organs.

Its function is as follows. Non functional suppressor of the fon2 mutation. In Oryza sativa subsp. japonica, the protein has a single amino acid substitution at the putative processing site of the signal peptide while in all the other varieties/species of domesticated and wild rice tested the protein is functional. In Oryza sativa subsp. japonica (Rice), this protein is Inactive protein FON2 SPARE1 (FOS1).